Consider the following 296-residue polypeptide: 4-hydroxybenzoate octaprenyltransferase (296 aa).

Transmembrane regions (helical) follow at residues 28–48 (IGTL…SDGI), 51–71 (LAVL…GCVI), 102–122 (LLLT…LNHL), 143–163 (FFPI…PMAF), 174–194 (AWIL…VYAM), 212–232 (FGRY…LLMA), 233–253 (VLGA…IVLL), and 274–294 (FLAN…HTFF).

It belongs to the UbiA prenyltransferase family. It depends on Mg(2+) as a cofactor.

The protein resides in the cell inner membrane. It catalyses the reaction all-trans-octaprenyl diphosphate + 4-hydroxybenzoate = 4-hydroxy-3-(all-trans-octaprenyl)benzoate + diphosphate. It participates in cofactor biosynthesis; ubiquinone biosynthesis. In terms of biological role, catalyzes the prenylation of para-hydroxybenzoate (PHB) with an all-trans polyprenyl group. Mediates the second step in the final reaction sequence of ubiquinone-8 (UQ-8) biosynthesis, which is the condensation of the polyisoprenoid side chain with PHB, generating the first membrane-bound Q intermediate 3-octaprenyl-4-hydroxybenzoate. The sequence is that of 4-hydroxybenzoate octaprenyltransferase from Neisseria gonorrhoeae (strain NCCP11945).